A 292-amino-acid polypeptide reads, in one-letter code: Aquaporin PIP1-3/PIP1-4 (292 aa).

The segment at 1 to 42 (MEGKEEDVRLGANKFSERQPIGTAAQGAGAGDDDKDYKEPPP) is disordered. Transmembrane regions (helical) follow at residues 61–81 (IAEF…VMGV) and 96–118 (IAWS…SGGH). The short motif at 120–122 (NPA) is the NPA 1 element. Helical transmembrane passes span 139 to 159 (IFYI…VKGF), 181 to 201 (GDGL…VFSA), and 215 to 235 (ILAP…TIPI). Residues 241–243 (NPA) carry the NPA 2 motif. The helical transmembrane segment at 263-283 (IFWVGPFIGAALAAIYHQVII) threads the bilayer.

It belongs to the MIP/aquaporin (TC 1.A.8) family. PIP (TC 1.A.8.11) subfamily.

Its subcellular location is the cell membrane. Its function is as follows. Aquaporins facilitate the transport of water and small neutral solutes across cell membranes. The protein is Aquaporin PIP1-3/PIP1-4 (PIP1-3) of Zea mays (Maize).